Consider the following 371-residue polypeptide: Phosphate acyltransferase (371 aa).

This sequence belongs to the PlsX family. In terms of assembly, homodimer. Probably interacts with PlsY.

It is found in the cytoplasm. The catalysed reaction is a fatty acyl-[ACP] + phosphate = an acyl phosphate + holo-[ACP]. It functions in the pathway lipid metabolism; phospholipid metabolism. Its function is as follows. Catalyzes the reversible formation of acyl-phosphate (acyl-PO(4)) from acyl-[acyl-carrier-protein] (acyl-ACP). This enzyme utilizes acyl-ACP as fatty acyl donor, but not acyl-CoA. This chain is Phosphate acyltransferase, found in Polaromonas sp. (strain JS666 / ATCC BAA-500).